A 277-amino-acid polypeptide reads, in one-letter code: Inositol monophosphatase 1 (277 aa).

4 residues coordinate Mg(2+): E70, D90, I92, and D93. Substrate-binding positions include E70, 90 to 95 (DPIDGT), 194 to 196 (GTA), E213, and D220. D220 lines the Mg(2+) pocket.

The protein belongs to the inositol monophosphatase superfamily. As to quaternary structure, homodimer. Requires Mg(2+) as cofactor. Mostly expressed in brain, small intestine, testis, kidney, and spleen (at protein level).

The protein localises to the cytoplasm. It carries out the reaction a myo-inositol phosphate + H2O = myo-inositol + phosphate. The enzyme catalyses 1D-myo-inositol 1-phosphate + H2O = myo-inositol + phosphate. The catalysed reaction is 1D-myo-inositol 2-phosphate + H2O = myo-inositol + phosphate. It catalyses the reaction 1D-myo-inositol 3-phosphate + H2O = myo-inositol + phosphate. It carries out the reaction 1D-myo-inositol 4-phosphate + H2O = myo-inositol + phosphate. The enzyme catalyses 1D-myo-inositol 5-phosphate + H2O = myo-inositol + phosphate. The catalysed reaction is 1D-myo-inositol 6-phosphate + H2O = myo-inositol + phosphate. It catalyses the reaction scyllo-inositol 1-phosphate + H2O = scyllo-inositol + phosphate. It carries out the reaction alpha-D-galactose 1-phosphate + H2O = D-galactose + phosphate. The enzyme catalyses alpha-D-glucose 1-phosphate + H2O = D-glucose + phosphate. The catalysed reaction is D-glucose 6-phosphate + H2O = D-glucose + phosphate. It catalyses the reaction beta-D-fructose 1-phosphate + H2O = D-fructose + phosphate. It carries out the reaction glycerol 2-phosphate + H2O = glycerol + phosphate. The enzyme catalyses adenosine 2'-phosphate + H2O = adenosine + phosphate. The protein operates within polyol metabolism; myo-inositol biosynthesis; myo-inositol from D-glucose 6-phosphate: step 2/2. With respect to regulation, inhibited by Li(+), Ca(2+) and Mn(2+), but also by Mg(2+) at concentrations above 3 mM. Its function is as follows. Phosphatase involved in the dephosphorylation of myo-inositol monophosphate to generate myo-inositol. Is also able to dephosphorylate scyllo-inositol-phosphate, myo-inositol 1,4-diphosphate, scyllo-inositol-1,3-diphosphate and scyllo-inositol-1,4-diphosphate. Also dephosphorylates in vitro other sugar-phosphates including D-galactose-1-phosphate, glucose-1-phosphate, glucose-6-phosphate, fructose-1-phosphate, beta-glycerophosphate and 2'-AMP. Responsible for the provision of inositol required for synthesis of phosphatidylinositol and polyphosphoinositides, and involved in maintaining normal brain function. Has been implicated as the pharmacological target for lithium Li(+) action in brain. This chain is Inositol monophosphatase 1 (Impa1), found in Mus musculus (Mouse).